Here is a 183-residue protein sequence, read N- to C-terminus: Peptidyl-tRNA hydrolase (183 aa).

Position 14 (tyrosine 14) interacts with tRNA. Histidine 19 acts as the Proton acceptor in catalysis. Residues tyrosine 60 and asparagine 62 each contribute to the tRNA site.

The protein belongs to the PTH family. In terms of assembly, monomer.

It is found in the cytoplasm. The enzyme catalyses an N-acyl-L-alpha-aminoacyl-tRNA + H2O = an N-acyl-L-amino acid + a tRNA + H(+). Hydrolyzes ribosome-free peptidyl-tRNAs (with 1 or more amino acids incorporated), which drop off the ribosome during protein synthesis, or as a result of ribosome stalling. Its function is as follows. Catalyzes the release of premature peptidyl moieties from peptidyl-tRNA molecules trapped in stalled 50S ribosomal subunits, and thus maintains levels of free tRNAs and 50S ribosomes. The polypeptide is Peptidyl-tRNA hydrolase (Mycoplasmoides gallisepticum (strain R(low / passage 15 / clone 2)) (Mycoplasma gallisepticum)).